The sequence spans 488 residues: UL37 immediate early glycoprotein (488 aa).

Residues 1–22 (MSPVYVNLLGSVGLLAFWYFSY) form the signal peptide. Residues 83-107 (GEESVTEDTEREDTEEEREDEEEEN) are compositionally biased toward acidic residues. The segment at 83–119 (GEESVTEDTEREDTEEEREDEEEENEARTPEVNPMDA) is disordered. Asn-206, Asn-210, Asn-219, Asn-223, Asn-242, Asn-275, Asn-281, Asn-294, Asn-297, Asn-306, Asn-333, Asn-337, Asn-343, Asn-384, and Asn-391 each carry an N-linked (GlcNAc...) asparagine; by host glycan. A helical membrane pass occupies residues 439–459 (ICTVAAGSIALLSLFCILLIG).

Belongs to the immediate early glycoprotein family. Interacts with host BAX. Interacts with host RSAD2/viperin; this interaction results in RSAD2/viperin relocalization from the endoplasmic reticulum to the mitochondria, actin cytoskeleton disruption and enhancement of infection. Interacts with host PEX19; this interaction inhibits the peroxisomal-dependent antiviral signaling. Interacts with host CHCHD6; this interaction rewires mitochondria by engaging the conserved MICOS complex.

The protein localises to the host membrane. It localises to the host endoplasmic reticulum membrane. It is found in the host Golgi apparatus membrane. The protein resides in the host mitochondrion membrane. Its subcellular location is the host peroxisome. In terms of biological role, multifunctional transmembrane protein that plays several key roles in viral replication. Rapidely traffics from the host endoplasmic reticulum to the outer mitochondrial membrane where it acts to inhibit host immune response, block apoptotic signaling, regulate calcium flux, and induce mitochondrial fragmentation. Sequesters proapoptotic BAX at the outer mitochondrial membrane and prevents cytochrome c release and subsequent initiation of the proapoptotic cascade. Also provoques a calcium efflux from host endoplasmic reticulum and F-actin cytoskeleton disruption. Participates in the increase of host mitochondrial biogenesis, thus promoting viral replication by efficient use of newly made mitochondria. Additionally, a subset of vMIA localizes to peroxisomes, causing fragmentation and blocking peroxisomal MAVS signaling. Mechanistically, inhibits host MAVS oligomerization at peroxisomes in a mitochondrial fission factors (MFF)-dependent manner and in mitochondria independently of mitochondrial fission factors. Plays an essential role in the trafficking of host viperin/RSAD2 from the endoplasmic reticulum to the viral assembly compartment via the mitochondria during viral infection as failure of viperin to localize to the mitochondria results in insufficient lipogenesis and thus reduces viral replication. Functionally, may play a role in escape from the host antiviral response. This Homo sapiens (Human) protein is UL37 immediate early glycoprotein (UL37).